Consider the following 504-residue polypeptide: Arabinose import ATP-binding protein AraG (504 aa).

ABC transporter domains follow at residues leucine 8 to arginine 243 and tyrosine 256 to valine 499. Glycine 40–serine 47 serves as a coordination point for ATP.

Belongs to the ABC transporter superfamily. Arabinose importer (TC 3.A.1.2.2) family. As to quaternary structure, the complex is composed of two ATP-binding proteins (AraG), two transmembrane proteins (AraH) and a solute-binding protein (AraF).

It is found in the cell inner membrane. The catalysed reaction is L-arabinose(out) + ATP + H2O = L-arabinose(in) + ADP + phosphate + H(+). In terms of biological role, part of the ABC transporter complex AraFGH involved in arabinose import. Responsible for energy coupling to the transport system. The chain is Arabinose import ATP-binding protein AraG from Escherichia coli O6:K15:H31 (strain 536 / UPEC).